The following is a 187-amino-acid chain: Endoribonuclease YbeY (187 aa).

Positions 151, 155, and 161 each coordinate Zn(2+).

Belongs to the endoribonuclease YbeY family. Requires Zn(2+) as cofactor.

It localises to the cytoplasm. Single strand-specific metallo-endoribonuclease involved in late-stage 70S ribosome quality control and in maturation of the 3' terminus of the 16S rRNA. This chain is Endoribonuclease YbeY, found in Prochlorococcus marinus (strain MIT 9313).